We begin with the raw amino-acid sequence, 188 residues long: Pyridoxal 5'-phosphate synthase subunit PdxT (188 aa).

46 to 48 contacts L-glutamine; it reads GES. Cys78 serves as the catalytic Nucleophile. Residues Arg105 and 134 to 135 contribute to the L-glutamine site; that span reads IR. Catalysis depends on charge relay system residues His170 and Glu172.

The protein belongs to the glutaminase PdxT/SNO family. As to quaternary structure, in the presence of PdxS, forms a dodecamer of heterodimers. Only shows activity in the heterodimer.

It catalyses the reaction aldehydo-D-ribose 5-phosphate + D-glyceraldehyde 3-phosphate + L-glutamine = pyridoxal 5'-phosphate + L-glutamate + phosphate + 3 H2O + H(+). The catalysed reaction is L-glutamine + H2O = L-glutamate + NH4(+). It functions in the pathway cofactor biosynthesis; pyridoxal 5'-phosphate biosynthesis. Its function is as follows. Catalyzes the hydrolysis of glutamine to glutamate and ammonia as part of the biosynthesis of pyridoxal 5'-phosphate. The resulting ammonia molecule is channeled to the active site of PdxS. The sequence is that of Pyridoxal 5'-phosphate synthase subunit PdxT from Desulforamulus reducens (strain ATCC BAA-1160 / DSM 100696 / MI-1) (Desulfotomaculum reducens).